The chain runs to 432 residues: Beta-fructosidase (432 aa).

Residues 14–17 (WMND), Gln33, Trp41, 74–75 (FS), Tyr92, 137–138 (RD), 188–190 (EIE), Thr208, and Trp260 contribute to the substrate site. Asp17 is a catalytic residue.

Belongs to the glycosyl hydrolase 32 family.

It catalyses the reaction Hydrolysis of terminal non-reducing beta-D-fructofuranoside residues in beta-D-fructofuranosides.. Hydrolysis of sucrose, raffinose, inulin and levan. Specific for the fructose moiety and the beta-anomeric configuration of the glycosidic linkages of its substrates. The enzyme released fructose from sucrose and raffinose, and the fructose polymer inulin is hydrolyzed quantitatively in an exo-type fashion. This is Beta-fructosidase (bfrA) from Thermotoga maritima (strain ATCC 43589 / DSM 3109 / JCM 10099 / NBRC 100826 / MSB8).